A 150-amino-acid polypeptide reads, in one-letter code: Ribosomal RNA large subunit methyltransferase H (150 aa).

S-adenosyl-L-methionine is bound by residues Ile-71, Ala-100, and 118-123; that span reads LSEMTF.

This sequence belongs to the RNA methyltransferase RlmH family. As to quaternary structure, homodimer.

The protein localises to the cytoplasm. It catalyses the reaction pseudouridine(1915) in 23S rRNA + S-adenosyl-L-methionine = N(3)-methylpseudouridine(1915) in 23S rRNA + S-adenosyl-L-homocysteine + H(+). Its function is as follows. Specifically methylates the pseudouridine at position 1915 (m3Psi1915) in 23S rRNA. This chain is Ribosomal RNA large subunit methyltransferase H, found in Helicobacter acinonychis (strain Sheeba).